We begin with the raw amino-acid sequence, 1001 residues long: Serine/threonine-protein kinase TAO1 (1001 aa).

Ser-9 carries the phosphoserine modification. The Protein kinase domain maps to 28-281; that stretch reads FTDLREIGHG…SEELLKHMFV (254 aa). ATP is bound by residues 34-42 and Lys-57; that span reads IGHGSFGAV. The Proton acceptor role is filled by Asp-151. Disordered stretches follow at residues 324-380 and 404-433; these read PAVE…DKSE and ENYQ…SHYR. The segment covering 350–370 has biased composition (low complexity); the sequence is SNQSIPSMSISASSQSSSVNS. Residues Ser-421 and Ser-445 each carry the phosphoserine modification. Residues 458 to 651 are a coiled coil; the sequence is SELREQMSGY…QTQKDLEHAM (194 aa). The tract at residues 567–587 is disordered; it reads KEELNENQSTPKKEKQEWLSK. Residues 577-587 are compositionally biased toward basic and acidic residues; that stretch reads PKKEKQEWLSK. Thr-669 carries the post-translational modification Phosphothreonine. A coiled-coil region spans residues 754–877; sequence KAVLKRLKEE…LERQAREIEA (124 aa). Residues 905-1001 form a disordered region; it reads PGASSWSHNP…ISNGSHMSYT (97 aa). Over residues 921–930 the composition is skewed to low complexity; that stretch reads HWGHPMGGTP. Ser-965 is modified (phosphoserine). Positions 975–1001 are enriched in polar residues; it reads GGRTEQGMSRSTSVTSQISNGSHMSYT.

The protein belongs to the protein kinase superfamily. STE Ser/Thr protein kinase family. STE20 subfamily. In terms of assembly, self-associates. Interacts with MAP2K3. Interacts with SPRED1. Interacts with TESK1; the interaction inhibits TAOK1 kinase activity. Interacts with MAP3K7. In terms of processing, proteolytically processed by caspase-3 (CASP3). Autophosphorylated. Phosphorylated by ATM in response to DNA damage. Phosphorylated by LRRK2.

The protein resides in the cytoplasm. The enzyme catalyses L-seryl-[protein] + ATP = O-phospho-L-seryl-[protein] + ADP + H(+). It catalyses the reaction L-threonyl-[protein] + ATP = O-phospho-L-threonyl-[protein] + ADP + H(+). With respect to regulation, serine/threonine-protein kinase activity is inhibited by SPRED1. Functionally, serine/threonine-protein kinase involved in various processes such as p38/MAPK14 stress-activated MAPK cascade, DNA damage response and regulation of cytoskeleton stability. Phosphorylates MAP2K3, MAP2K6 and MARK2. Acts as an activator of the p38/MAPK14 stress-activated MAPK cascade by mediating phosphorylation and subsequent activation of the upstream MAP2K3 and MAP2K6 kinases. Involved in G-protein coupled receptor signaling to p38/MAPK14. In response to DNA damage, involved in the G2/M transition DNA damage checkpoint by activating the p38/MAPK14 stress-activated MAPK cascade, probably by mediating phosphorylation of MAP2K3 and MAP2K6. Acts as a regulator of cytoskeleton stability by phosphorylating 'Thr-208' of MARK2, leading to activate MARK2 kinase activity and subsequent phosphorylation and detachment of MAPT/TAU from microtubules. Also acts as a regulator of apoptosis: regulates apoptotic morphological changes, including cell contraction, membrane blebbing and apoptotic bodies formation via activation of the MAPK8/JNK cascade. During fetal development, it plays an essential role in the regulation of neuronal differentiation and migration to the cortical plate. This is Serine/threonine-protein kinase TAO1 (Taok1) from Mus musculus (Mouse).